We begin with the raw amino-acid sequence, 286 residues long: Mycolic acid methyltransferase MmaA1 (286 aa).

Residues 32 to 33, 71 to 73, 93 to 98, and 122 to 123 each bind S-adenosyl-L-methionine; these read YT, GCG, TLSRNH, and WE. Cysteine 268 is an active-site residue.

The protein belongs to the CFA/CMAS family.

It participates in lipid metabolism; mycolic acid biosynthesis. Involved in the conversion of a cis-olefin into a trans-olefin with concomitant introduction of an allylic methyl branch at the proximal position of the precursor to both the methoxy and ketomycolic acids. It directly affects the cis- to trans ratio and indirectly affects the keto to methoxy ratio. The protein is Mycolic acid methyltransferase MmaA1 (cmaD) of Mycobacterium bovis (strain ATCC BAA-935 / AF2122/97).